The sequence spans 439 residues: Enolase (439 aa).

A (2R)-2-phosphoglycerate-binding site is contributed by Gln163. Catalysis depends on Glu205, which acts as the Proton donor. Positions 242, 287, and 314 each coordinate Mg(2+). (2R)-2-phosphoglycerate-binding residues include Lys339, Arg368, Ser369, and Lys390. Lys339 acts as the Proton acceptor in catalysis.

The protein belongs to the enolase family. Mg(2+) serves as cofactor.

The protein resides in the cytoplasm. The protein localises to the secreted. It is found in the cell surface. It catalyses the reaction (2R)-2-phosphoglycerate = phosphoenolpyruvate + H2O. Its pathway is carbohydrate degradation; glycolysis; pyruvate from D-glyceraldehyde 3-phosphate: step 4/5. Functionally, catalyzes the reversible conversion of 2-phosphoglycerate (2-PG) into phosphoenolpyruvate (PEP). It is essential for the degradation of carbohydrates via glycolysis. This is Enolase from Levilactobacillus brevis (strain ATCC 367 / BCRC 12310 / CIP 105137 / JCM 1170 / LMG 11437 / NCIMB 947 / NCTC 947) (Lactobacillus brevis).